A 152-amino-acid chain; its full sequence is B3 domain-containing protein At1g10455 (152 aa).

Residues 24–131 (LKKKLSDSDL…EVKFKHFKSQ (108 aa)) constitute a DNA-binding region (TF-B3).

It localises to the nucleus. This is B3 domain-containing protein At1g10455 from Arabidopsis thaliana (Mouse-ear cress).